The chain runs to 958 residues: Glycine dehydrogenase (decarboxylating) (958 aa).

At Lys707 the chain carries N6-(pyridoxal phosphate)lysine.

This sequence belongs to the GcvP family. As to quaternary structure, the glycine cleavage system is composed of four proteins: P, T, L and H. Requires pyridoxal 5'-phosphate as cofactor.

It carries out the reaction N(6)-[(R)-lipoyl]-L-lysyl-[glycine-cleavage complex H protein] + glycine + H(+) = N(6)-[(R)-S(8)-aminomethyldihydrolipoyl]-L-lysyl-[glycine-cleavage complex H protein] + CO2. Its function is as follows. The glycine cleavage system catalyzes the degradation of glycine. The P protein binds the alpha-amino group of glycine through its pyridoxal phosphate cofactor; CO(2) is released and the remaining methylamine moiety is then transferred to the lipoamide cofactor of the H protein. The sequence is that of Glycine dehydrogenase (decarboxylating) from Stutzerimonas stutzeri (strain A1501) (Pseudomonas stutzeri).